The sequence spans 153 residues: SsrA-binding protein (153 aa).

Belongs to the SmpB family.

It is found in the cytoplasm. Its function is as follows. Required for rescue of stalled ribosomes mediated by trans-translation. Binds to transfer-messenger RNA (tmRNA), required for stable association of tmRNA with ribosomes. tmRNA and SmpB together mimic tRNA shape, replacing the anticodon stem-loop with SmpB. tmRNA is encoded by the ssrA gene; the 2 termini fold to resemble tRNA(Ala) and it encodes a 'tag peptide', a short internal open reading frame. During trans-translation Ala-aminoacylated tmRNA acts like a tRNA, entering the A-site of stalled ribosomes, displacing the stalled mRNA. The ribosome then switches to translate the ORF on the tmRNA; the nascent peptide is terminated with the 'tag peptide' encoded by the tmRNA and targeted for degradation. The ribosome is freed to recommence translation, which seems to be the essential function of trans-translation. The polypeptide is SsrA-binding protein (Cytophaga hutchinsonii (strain ATCC 33406 / DSM 1761 / CIP 103989 / NBRC 15051 / NCIMB 9469 / D465)).